Reading from the N-terminus, the 197-residue chain is Rac-like GTP-binding protein RHO1 (197 aa).

Position 13–20 (13–20 (GDGAVGKT)) interacts with GTP. The Effector region signature appears at 35 to 43 (YVPTVFDNF). Residues 60–64 (DTAGQ) and 118–121 (TKLD) each bind GTP. C194 carries the post-translational modification Cysteine methyl ester. C194 is lipidated: S-geranylgeranyl cysteine. Residues 195-197 (SIL) constitute a propeptide, removed in mature form.

This sequence belongs to the small GTPase superfamily. Rho family. As to expression, expressed at the tip of pollen tubes.

It localises to the cytoplasm. It is found in the membrane. Functionally, inactive GDP-bound Rho GTPases reside in the cytosol, are found in a complex with Rho GDP-dissociation inhibitors (Rho GDIs), and are released from the GDI protein in order to translocate to membranes upon activation. May be involved in cell polarity control during the actin-dependent tip growth of pollen tubes. In Pisum sativum (Garden pea), this protein is Rac-like GTP-binding protein RHO1 (RHO1).